A 448-amino-acid polypeptide reads, in one-letter code: Asparagine--tRNA ligase (448 aa).

Belongs to the class-II aminoacyl-tRNA synthetase family. Homodimer.

Its subcellular location is the cytoplasm. The catalysed reaction is tRNA(Asn) + L-asparagine + ATP = L-asparaginyl-tRNA(Asn) + AMP + diphosphate + H(+). In Streptococcus pyogenes serotype M4 (strain MGAS10750), this protein is Asparagine--tRNA ligase.